The primary structure comprises 1217 residues: WD repeat-containing protein on Y chromosome (1217 aa).

WD repeat units follow at residues 155–199 (EDMT…LRSA), 323–362 (RIPL…EPSA), 366–405 (GHNG…LLQT), 456–495 (THAA…RKII), 508–547 (TIDI…VVRN), 595–635 (FHTD…RRYN), 740–779 (KVGD…IPEA), and 823–862 (GHLK…LGTL). 2 disordered regions span residues 910-929 (QVKR…VEDT) and 1033-1217 (AGGQ…KDKP). Over residues 919 to 929 (EREDEGEVEDT) the composition is skewed to acidic residues. Composition is skewed to polar residues over residues 1041 to 1054 (RASS…TNSI), 1085 to 1107 (FGPN…SQLK), and 1137 to 1179 (PVST…TSAN). Positions 1181–1190 (KPDIMPVKIK) are enriched in low complexity. Over residues 1198-1210 (RNTAPVQITTSIA) the composition is skewed to polar residues.

The protein is WD repeat-containing protein on Y chromosome of Drosophila mojavensis (Fruit fly).